A 1081-amino-acid chain; its full sequence is MTIFDAVAKAIVPSVTHAIEENNKNREIQEKRQKETKDRNDRMVQNQKDRKEMIGLTNEKQTYSNSVKNAKTDNEKKIFQNLLDKTNSRITDIEKRQSGDISEYKRLVEENKNLEKNVKEFKEVMKPFEENDIIHNPKHVDEDTIEENKKKMEDIKEVLGFTKTAANGGLPPNHDEDNKKIAELKKKYDDVKNHGHSNSGGLVGSVFNAIVPSVKENLRNAELENIQKEIKQTEDKISNDDKFYNTYKLTDDERKQFGSNPGDPQATPTPTPTPTPTPTPTPTPTTTTTTTTTPKPTTTTTTTSTTTPTKTSTNTNDKPGIFETVGGGSGKVADALNPIRIVTGGAIFSDTMEKIGGGSGKLADEGVEAVGSGISNFAQSVGIIPKKQEPKKDENNNQSNNNNNNNQAGDDQNKNQNRDENNQGGENNQGGENNQDGENNQNGDENNQGGENNQGDENNQGGENNQGDQNNQDGGENNQDGGENNQDGHGNNQDGENNQDGGENNQDSGENNQDGGENNQDGGENNQDGGENNQDGGENNQDGGENNQDGGENNQDGENNQDGENNQENNRDGENNQDGGENNQDGGENNQDGENNQDGGENNQDDGENKQDGGENNQDGGENNQDDGENNQDGENNQDGGENNQDGDENNQDSGENNQDSGENNQDGGENNQDGDENNQDGGENNQDGENNQNGENNQDGGENNQDGENNQDGENNQDGGENNQDGGENNQDGGEDNQDGGENNQEGGEDNQDGGEDNQDGGEDNQDGGENNQGDENNQDVDENNQDGENNQDGDENNQDGENNQDGENNQDGDENNNQDGEQNQDGDENNQDGGENNQDGDENNNQDGDENNNQDGGENNQDGGENNQDGDENNNQDGGENNQDGENNQDGDENNNQDGEQNQDGDENNQEGDENNNQGDDENNNQDGDENNNQDGDENNQDGDENNQDGDENNQGNDENNQDGDQNNQGGDENNQDGDGENNQGDENNQDGGENNQDGGENNQDQDGSENNQGNNENNQGGDENNQDQDGGENNQGNDENNQGGDENNQGNENDQGGDENNQGGDENTNQEENGGNDE.

Coiled coils occupy residues 18–131 (AIEE…FEEN) and 173–242 (NHDE…NDDK). Positions 22 to 53 (NNKNREIQEKRQKETKDRNDRMVQNQKDRKEM) are enriched in basic and acidic residues. The disordered stretch occupies residues 22-60 (NNKNREIQEKRQKETKDRNDRMVQNQKDRKEMIGLTNEK). 2 disordered regions span residues 250–321 (TDDE…KPGI) and 388–1081 (QEPK…GNDE). The span at 267 to 283 (TPTPTPTPTPTPTPTPT) shows a compositional bias: pro residues. Low complexity-rich tracts occupy residues 284–313 (PTTT…KTST) and 396–410 (NNQS…QAGD). Residues 411–421 (DQNKNQNRDEN) show a composition bias toward basic and acidic residues. Composition is skewed to low complexity over residues 422–568 (NQGG…NNQE), 576–602 (NQDG…GGEN), 614–623 (GENNQDGGEN), 633–644 (DGENNQDGGENN), 662–672 (GENNQDGGENN), and 680–733 (QDGG…NNQD). Acidic residues-rich tracts occupy residues 748 to 768 (GGED…DNQD), 778 to 832 (NNQD…DENN), and 840 to 854 (QDGD…DENN). Low complexity-rich tracts occupy residues 855–869 (NQDG…GENN) and 877–888 (NQDGGENNQDGE). Residues 889–954 (NNQDGDENNN…GDENNQDGDE (66 aa)) show a composition bias toward acidic residues. Composition is skewed to low complexity over residues 955-975 (NNQG…GGDE), 983-1026 (ENNQ…GGDE), and 1034-1081 (GENN…GNDE).

This is an uncharacterized protein from Dictyostelium discoideum (Social amoeba).